The primary structure comprises 102 residues: Small ribosomal subunit protein uS10 (102 aa).

It belongs to the universal ribosomal protein uS10 family. As to quaternary structure, part of the 30S ribosomal subunit.

Functionally, involved in the binding of tRNA to the ribosomes. The sequence is that of Small ribosomal subunit protein uS10 from Methylobacterium radiotolerans (strain ATCC 27329 / DSM 1819 / JCM 2831 / NBRC 15690 / NCIMB 10815 / 0-1).